Here is a 367-residue protein sequence, read N- to C-terminus: D-alanine--D-alanine ligase (367 aa).

Residues lysine 150–glutamate 357 form the ATP-grasp domain. Arginine 178–glutamate 233 provides a ligand contact to ATP. Aspartate 312, glutamate 324, and asparagine 326 together coordinate Mg(2+).

Belongs to the D-alanine--D-alanine ligase family. Requires Mg(2+) as cofactor. It depends on Mn(2+) as a cofactor.

It is found in the cytoplasm. It carries out the reaction 2 D-alanine + ATP = D-alanyl-D-alanine + ADP + phosphate + H(+). It functions in the pathway cell wall biogenesis; peptidoglycan biosynthesis. Its function is as follows. Cell wall formation. This is D-alanine--D-alanine ligase from Mycolicibacterium gilvum (strain PYR-GCK) (Mycobacterium gilvum (strain PYR-GCK)).